A 620-amino-acid polypeptide reads, in one-letter code: MDSHTLIQALIYLGSAALIVPIAVRLGLGSVLGYLIAGCIIGPWGLRLVTDAESILHFAEIGVVLMLFIIGLELDPQRLWKLRAAVFGGGALQMVICGGLLGLFCMLLGLRWQVAELIGMTLALSSTAIAMQAMNERNLMVTQMGRSAFAVLLFQDIAAIPLVAMIPLLAASSASTTMGAFVLSALKVAGALALVVLLGRYVTRPALRFVARSGLREVFSAVALFLVFGFGLLLEEVGLSMAMGAFLAGVLLASSEYRHALESDIEPFKGLLLGLFFIGVGMSIDFGTLLENPLRIVILLLGFLIIKIAMLWLIARPLQVPNKQRRWFAVLLGQGSEFAFVVFGAAQMANVLEPEWAKSLTLAVALSMAATPILLVILNRLEQSSTEEAREADEIDEEQPRVIIAGFGRFGQITGRLLLSSGVKMVVLDHDPDHIETLRKFGMKVFYGDATRMDLLESAGAAKAEVLINAIDDPQTNLQLTEMVKEHFPHLQIIARARDVDHYIRLRQAGVEKPERETFEGALKTGRLALESLGLGPYEARERADVFRRFNIQMVEEMAMVENDTKARAAVYKRTSAMLSEIITEDREHLSLIQRHGWQGTEEGKHTGNMADEPETKPSS.

The Periplasmic segment spans residues M1–S3. The helical transmembrane segment at H4–V24 threads the bilayer. Residue R25 is a topological domain, cytoplasmic. Residues L26 to L46 traverse the membrane as a helical segment. Over R47–E53 the chain is Periplasmic. Residues S54 to L74 traverse the membrane as a helical segment. The Cytoplasmic segment spans residues D75 to G89. The chain crosses the membrane as a helical span at residues G90–L110. At R111–Q113 the chain is on the periplasmic side. Residues V114 to M134 traverse the membrane as a helical segment. The Cytoplasmic portion of the chain corresponds to N135 to A148. A helical transmembrane segment spans residues F149–L169. Residues A170–T177 are Periplasmic-facing. The helical transmembrane segment at M178–L198 threads the bilayer. Topologically, residues G199–S213 are cytoplasmic. The helical transmembrane segment at G214–L233 threads the bilayer. Residues L234–E236 lie on the Periplasmic side of the membrane. A helical membrane pass occupies residues V237–S254. The Cytoplasmic portion of the chain corresponds to S255–K269. A helical transmembrane segment spans residues G270–L290. Topologically, residues E291 to P293 are periplasmic. Residues L294–I314 traverse the membrane as a helical segment. Topologically, residues A315–R326 are cytoplasmic. Residues W327–Q347 form a helical membrane-spanning segment. At M348–K358 the chain is on the periplasmic side. Residues S359–N379 form a helical membrane-spanning segment. Residues R380–S620 are Cytoplasmic-facing. In terms of domain architecture, RCK N-terminal spans Q399–T518. The segment at G597–S620 is disordered.

This sequence belongs to the monovalent cation:proton antiporter 2 (CPA2) transporter (TC 2.A.37) family. KefC subfamily. As to quaternary structure, homodimer. Interacts with the regulatory subunit KefF.

It is found in the cell inner membrane. Functionally, pore-forming subunit of a potassium efflux system that confers protection against electrophiles. Catalyzes K(+)/H(+) antiport. This Escherichia coli O6:H1 (strain CFT073 / ATCC 700928 / UPEC) protein is Glutathione-regulated potassium-efflux system protein KefC.